Consider the following 504-residue polypeptide: Heat shock 70 kDa protein 14 (504 aa).

It belongs to the heat shock protein 70 family. In terms of assembly, component of ribosome-associated complex (RAC).

The protein resides in the cytoplasm. Its subcellular location is the cytosol. Functionally, component of the ribosome-associated complex (RAC), a complex involved in folding or maintaining nascent polypeptides in a folding-competent state. This is Heat shock 70 kDa protein 14 (hspa14) from Danio rerio (Zebrafish).